An 829-amino-acid chain; its full sequence is Genome polyprotein (829 aa).

N-acetylserine; by host is present on Ser-2. The tract at residues 2-23 is interaction with STAT1; it reads STNPKPQRKTKRNTNRRPQDVK. Positions 2–58 are interaction with EIF2AK2/PKR; sequence STNPKPQRKTKRNTNRRPQDVKFPGGGQIVGGVYLLPRRGPRLGVRATRKTSERSQP. The interaction with DDX3X stretch occupies residues 2–59; that stretch reads STNPKPQRKTKRNTNRRPQDVKFPGGGQIVGGVYLLPRRGPRLGVRATRKTSERSQPR. Residues 2 to 75 form a disordered region; that stretch reads STNPKPQRKT…PKARRPKGRN (74 aa). The Cytoplasmic segment spans residues 2–168; the sequence is STNPKPQRKT…EDGVNYATGN (167 aa). 2 consecutive short sequence motifs (nuclear localization signal) follow at residues 5–13 and 38–43; these read PKPQRKTKR and PRRGPR. A compositionally biased stretch (basic residues) spans 7 to 16; sequence PQRKTKRNTN. A compositionally biased stretch (low complexity) spans 32-47; sequence GGVYLLPRRGPRLGVR. Phosphoserine; by host is present on Ser-53. Short sequence motifs (nuclear localization signal) lie at residues 58-64 and 66-71; these read PRGRRQP and PKARRP. A compositionally biased stretch (basic residues) spans 58 to 73; the sequence is PRGRRQPIPKARRPKG. Ser-99 bears the Phosphoserine; by host mark. Residues 112-152 form an important for endoplasmic reticulum and mitochondrial localization region; that stretch reads PRRRSRNLGKVIDTLTCGFVDLMGYIPLVGAPLRGAARALA. Ser-116 carries the phosphoserine; by host PKA modification. Positions 122-173 are interaction with APOA2; the sequence is VIDTLTCGFVDLMGYIPLVGAPLRGAARALAHGVRVLEDGVNYATGNLPGCS. An important for lipid droplets localization region spans residues 164 to 167; sequence YATG. A helical membrane pass occupies residues 169–189; that stretch reads LPGCSFSIFLLALLSCLTVPA. A propeptide spans 178–191 (ER anchor for the core protein, removed in mature form by host signal peptidase); sequence LLALLSCLTVPASA. The Lumenal portion of the chain corresponds to 190 to 358; the sequence is SAYQVRNSTG…AGAHWGVLAG (169 aa). N-linked (GlcNAc...) asparagine; by host glycosylation is found at Asn-196, Asn-209, and Asn-234. Positions 265–296 are important for fusion; sequence LVGSATLCSALYVGDLCGSVFLVGQLFTFSPR. Asn-305 carries N-linked (GlcNAc...) asparagine; by host glycosylation. The chain crosses the membrane as a helical span at residues 359–379; the sequence is MAYFSMVGNWAKVLAVLLLFA. The Lumenal portion of the chain corresponds to 380–725; it reads GVDAETHVTG…WEYVVLLFLL (346 aa). Positions 385–411 are HVR1; the sequence is THVTGGAAARSTLQLAGLFQPGAKQNV. Asn-417, Asn-423, Asn-430, and Asn-448 each carry an N-linked (GlcNAc...) (high mannose) asparagine; by host glycan. Intrachain disulfides connect Cys-429–Cys-552, Cys-452–Cys-459, Cys-486–Cys-494, and Cys-503–Cys-508. Residues 474–479 form an HVR2 region; the sequence is YAGGGG. A CD81-binding 1 region spans residues 480–493; that stretch reads PDHRPYCWHYPPKP. Asn-540 carries N-linked (GlcNAc...) asparagine; by host glycosylation. The CD81-binding 2 stretch occupies residues 544-551; sequence PPLGNWFG. Asn-556 carries an N-linked (GlcNAc...) (high mannose) asparagine; by host glycan. Cysteines 564 and 569 form a disulfide. The N-linked (GlcNAc...) (high mannose) asparagine; by host glycan is linked to Asn-576. Cystine bridges form between Cys-581–Cys-585, Cys-597–Cys-620, and Cys-607–Cys-644. N-linked (GlcNAc...) (high mannose) asparagine; by host glycosylation is found at Asn-623 and Asn-645. The cysteines at positions 652 and 677 are disulfide-linked. A PKR/eIF2-alpha phosphorylation homology domain (PePHD) region spans residues 660 to 671; it reads SELSPLLLSTTQ. A helical transmembrane segment spans residues 726 to 746; sequence LADARVCSCLWMMLLISQAEA. Residues 747–757 lie on the Lumenal side of the membrane; the sequence is ALENLVVLNAA. Residues 758–778 traverse the membrane as a helical segment; that stretch reads SLAGTHGLVSFLVFFCFAWFL. Residues 779–781 lie on the Cytoplasmic side of the membrane; that stretch reads RGK. The helical transmembrane segment at 782-803 threads the bilayer; the sequence is WVPGAVYALYGMWPLLLLLLAL. The Lumenal segment spans residues 804 to 813; sequence PQRAYALDTE. A helical membrane pass occupies residues 814–829; the sequence is VAASCGGVVLVGLMAL.

This sequence belongs to the hepacivirus polyprotein family. In terms of assembly, homooligomer. Interacts with E1 (via C-terminus). Interacts with the non-structural protein 5A. Interacts (via N-terminus) with host STAT1 (via SH2 domain); this interaction results in decreased STAT1 phosphorylation and ubiquitin-mediated proteasome-dependent STAT1 degradation, leading to decreased IFN-stimulated gene transcription. Interacts with host STAT3; this interaction constitutively activates STAT3. Interacts with host LTBR receptor. Interacts with host TNFRSF1A receptor and possibly induces apoptosis. Interacts with host HNRPK. Interacts with host YWHAE. Interacts with host UBE3A/E6AP. Interacts with host DDX3X. Interacts with host APOA2. Interacts with host RXRA protein. Interacts with host SP110 isoform 3/Sp110b; this interaction sequesters the transcriptional corepressor SP110 away from the nucleus. Interacts with host CREB3 nuclear transcription protein; this interaction triggers cell transformation. Interacts with host ACY3. Interacts with host C1QR1. Interacts with host RBM24; this interaction, which enhances the interaction of the mature core protein with 5'-UTR, may inhibit viral translation and favor replication. Interacts with host EIF2AK2/PKR; this interaction induces the autophosphorylation of EIF2AK2. Part of the viral assembly initiation complex composed of NS2, E1, E2, NS3, NS4A, NS5A and the mature core protein. Forms a heterodimer with envelope glycoprotein E2. Interacts with mature core protein. Interacts with protease NS2. The heterodimer E1/E2 interacts with host CLDN1; this interaction plays a role in viral entry into host cell. Interacts with host SPSB2 (via C-terminus). Part of the viral assembly initiation complex composed of NS2, E1, E2, NS3, NS4A, NS5A and the mature core protein. As to quaternary structure, forms a heterodimer with envelope glycoprotein E1. Interacts with host CD81 and SCARB1 receptors; these interactions play a role in viral entry into host cell. Interacts with host EIF2AK2/PKR; this interaction inhibits EIF2AK2 and probably allows the virus to evade the innate immune response. Interacts with host CD209/DC-SIGN and CLEC4M/DC-SIGNR. Interact with host SPCS1; this interaction is essential for viral particle assembly. Interacts with protease NS2. The heterodimer E1/E2 interacts with host CLDN1; this interaction plays a role in viral entry into host cell. Part of the viral assembly initiation complex composed of NS2, E1, E2, NS3, NS4A, NS5A and the mature core protein. In terms of assembly, homohexamer. Homoheptamer. Interacts with protease NS2. Homodimer. Interacts with host SPCS1; this interaction is essential for viral particle assembly. Interacts with envelope glycoprotein E1. Interacts with envelope glycoprotein E2. Interacts with viroporin p7. Interacts with serine protease/helicase NS3. Part of the replication complex composed of NS2, NS3, NS4A, NS4B, NS5A and the RNA-directed RNA polymerase embedded in an ER-derived membranous web. Part of the viral assembly initiation complex composed of NS2, E1, E2, NS3, NS4A, NS5A and the mature core protein. The cofactor is Zn(2+). Post-translationally, specific enzymatic cleavages in vivo yield mature proteins. The structural proteins, core, E1, E2 and p7 are produced by proteolytic processing by host signal peptidases. The core protein precursor is synthesized as a 23 kDa, which is retained in the ER membrane through the hydrophobic signal peptide. Cleavage by the signal peptidase releases the 21 kDa mature core protein. The cleavage of the core protein precursor occurs between aminoacids 176 and 188 but the exact cleavage site is not known. Some degraded forms of the core protein appear as well during the course of infection. The other proteins (p7, NS2, NS3, NS4A, NS4B, NS5A and NS5B) are cleaved by the viral proteases. Autoprocessing between NS2 and NS3 is mediated by the NS2 cysteine protease catalytic domain and regulated by the NS3 N-terminal domain. Phosphorylated by host PKC and PKA. In terms of processing, ubiquitinated; mediated by UBE3A and leading to core protein subsequent proteasomal degradation. Post-translationally, highly N-glycosylated. Palmitoylation is required for NS2/3 autoprocessing and E2 recruitment to membranes.

It localises to the host endoplasmic reticulum membrane. It is found in the host mitochondrion membrane. The protein resides in the virion. The protein localises to the host cytoplasm. Its subcellular location is the host nucleus. It localises to the host lipid droplet. It is found in the virion membrane. The protein resides in the host mitochondrion. The protein localises to the host cell membrane. With respect to regulation, inhibited by the antiviral drug hexamethylene amiloride. Inhibition by amantadine appears to be genotype-dependent. Also inhibited by long-alkyl-chain iminosugar derivatives. Functionally, packages viral RNA to form a viral nucleocapsid, and promotes virion budding. Participates in the viral particle production as a result of its interaction with the non-structural protein 5A. Binds RNA and may function as a RNA chaperone to induce the RNA structural rearrangements taking place during virus replication. Modulates viral translation initiation by interacting with viral IRES and 40S ribosomal subunit. Affects various cell signaling pathways, host immunity and lipid metabolism. Prevents the establishment of cellular antiviral state by blocking the interferon-alpha/beta (IFN-alpha/beta) and IFN-gamma signaling pathways and by blocking the formation of phosphorylated STAT1 and promoting ubiquitin-mediated proteasome-dependent degradation of STAT1. Activates STAT3 leading to cellular transformation. Regulates the activity of cellular genes, including c-myc and c-fos. May repress the promoter of p53, and sequester CREB3 and SP110 isoform 3/Sp110b in the cytoplasm. Represses cell cycle negative regulating factor CDKN1A, thereby interrupting an important check point of normal cell cycle regulation. Targets transcription factors involved in the regulation of inflammatory responses and in the immune response: suppresses TNF-induced NF-kappa-B activation, and activates AP-1. Binds to dendritic cells (DCs) via C1QR1, resulting in down-regulation of T-lymphocytes proliferation. Alters lipid metabolism by interacting with hepatocellular proteins involved in lipid accumulation and storage. Induces up-regulation of FAS promoter activity, and thereby contributes to the increased triglyceride accumulation in hepatocytes (steatosis). Forms a heterodimer with envelope glycoprotein E2, which mediates virus attachment to the host cell, virion internalization through clathrin-dependent endocytosis and fusion with host membrane. Fusion with the host cell is most likely mediated by both E1 and E2, through conformational rearrangements of the heterodimer required for fusion rather than a classical class II fusion mechanism. E1/E2 heterodimer binds host apolipoproteins such as APOB and ApoE thereby forming a lipo-viro-particle (LVP). APOE associated to the LVP allows the initial virus attachment to cell surface receptors such as the heparan sulfate proteoglycans (HSPGs), syndecan-1 (SDC1), syndecan-1 (SDC2), the low-density lipoprotein receptor (LDLR) and scavenger receptor class B type I (SCARB1). The cholesterol transfer activity of SCARB1 allows E2 exposure and binding of E2 to SCARB1 and the tetraspanin CD81. E1/E2 heterodimer binding on CD81 activates the epithelial growth factor receptor (EGFR) signaling pathway. Diffusion of the complex E1-E2-EGFR-SCARB1-CD81 to the cell lateral membrane allows further interaction with Claudin 1 (CLDN1) and occludin (OCLN) to finally trigger HCV entry. Its function is as follows. Forms a heterodimer with envelope glycoprotein E1, which mediates virus attachment to the host cell, virion internalization through clathrin-dependent endocytosis and fusion with host membrane. Fusion with the host cell is most likely mediated by both E1 and E2, through conformational rearrangements of the heterodimer required for fusion rather than a classical class II fusion mechanism. The interaction between envelope glycoprotein E2 and host apolipoprotein E/APOE allows the proper assembly, maturation and infectivity of the viral particles. This interaction is probably promoted via the up-regulation of cellular autophagy by the virus. E1/E2 heterodimer binds host apolipoproteins such as APOB and APOE thereby forming a lipo-viro-particle (LVP). APOE associated to the LVP allows the initial virus attachment to cell surface receptors such as the heparan sulfate proteoglycans (HSPGs), syndecan-1 (SDC1), syndecan-1 (SDC2), the low-density lipoprotein receptor (LDLR) and scavenger receptor class B type I (SCARB1). The cholesterol transfer activity of SCARB1 allows E2 exposure and binding of E2 to SCARB1 and the tetraspanin CD81. E1/E2 heterodimer binding on CD81 activates the epithelial growth factor receptor (EGFR) signaling pathway. Diffusion of the complex E1-E2-EGFR-SCARB1-CD81 to the cell lateral membrane allows further interaction with Claudin 1 (CLDN1) and occludin (OCLN) to finally trigger HCV entry. Inhibits host EIF2AK2/PKR activation, preventing the establishment of an antiviral state. Viral ligand for CD209/DC-SIGN and CLEC4M/DC-SIGNR, which are respectively found on dendritic cells (DCs), and on liver sinusoidal endothelial cells and macrophage-like cells of lymph node sinuses. These interactions allow the capture of circulating HCV particles by these cells and subsequent facilitated transmission to permissive cells such as hepatocytes and lymphocyte subpopulations. In terms of biological role, ion channel protein that acts as a viroporin and plays an essential role in the assembly, envelopment and secretion of viral particles. Regulates the host cell secretory pathway, which induces the intracellular retention of viral glycoproteins and favors assembly of viral particles. Creates a pore in acidic organelles and releases Ca(2+) and H(+) in the cytoplasm of infected cells, leading to a productive viral infection. High levels of cytoplasmic Ca(2+) may trigger membrane trafficking and transport of viral ER-associated proteins to viroplasms, sites of viral genome replication. This ionic imbalance induces the assembly of the inflammasome complex, which triggers the maturation of pro-IL-1beta into IL-1beta through the action of caspase-1. Targets also host mitochondria and induces mitochondrial depolarization. In addition of its role as a viroporin, acts as a lipid raft adhesion factor. Functionally, cysteine protease required for the proteolytic auto-cleavage between the non-structural proteins NS2 and NS3. The N-terminus of NS3 is required for the function of NS2 protease (active region NS2-3). Promotes the initiation of viral particle assembly by mediating the interaction between structural and non-structural proteins. This chain is Genome polyprotein, found in Hepatitis C virus (isolate Glasgow) (HCV).